A 205-amino-acid polypeptide reads, in one-letter code: GTP cyclohydrolase 1 (205 aa).

3 residues coordinate Zn(2+): cysteine 93, histidine 96, and cysteine 166.

Belongs to the GTP cyclohydrolase I family. As to quaternary structure, homomer.

It catalyses the reaction GTP + H2O = 7,8-dihydroneopterin 3'-triphosphate + formate + H(+). Its pathway is cofactor biosynthesis; 7,8-dihydroneopterin triphosphate biosynthesis; 7,8-dihydroneopterin triphosphate from GTP: step 1/1. This chain is GTP cyclohydrolase 1, found in Mycobacterium leprae (strain Br4923).